The following is a 391-amino-acid chain: B2 bradykinin receptor (391 aa).

Over 1–60 the chain is Extracellular; it reads MFSPWKISMFLSVREDSVPTTASFSADMLNVTLQGPTLNGTFAQSKCPQVEWLGWLNTIQ. Asn-30 and Asn-39 each carry an N-linked (GlcNAc...) asparagine glycan. The helical transmembrane segment at 61–84 threads the bilayer; the sequence is PPFLWVLFVLATLENIFVLSVFCL. Over 85–93 the chain is Cytoplasmic; that stretch reads HKSSCTVAE. Residues 94–118 form a helical membrane-spanning segment; it reads IYLGNLAAADLILACGLPFWAITIS. Residues 119–131 are Extracellular-facing; the sequence is NNFDWLFGETLCR. The cysteines at positions 130 and 211 are disulfide-linked. A helical transmembrane segment spans residues 132–153; the sequence is VVNAIISMNLYSSICFLMLVSI. The Cytoplasmic segment spans residues 154–175; it reads DRYLALVKTMSMGRMRGVRWAK. Tyr-156 is subject to Phosphotyrosine. The chain crosses the membrane as a helical span at residues 176 to 198; that stretch reads LYSLVIWGCTLLLSSPMLVFRTM. Over 199 to 221 the chain is Extracellular; it reads KEYSDEGHNVTACVISYPSLIWE. The N-linked (GlcNAc...) asparagine glycan is linked to Asn-207. The chain crosses the membrane as a helical span at residues 222-248; the sequence is VFTNMLLNVVGFLLPLSVITFCTMQIM. Residues 249 to 267 are Cytoplasmic-facing; it reads QVLRNNEMQKFKEIQTERR. The helical transmembrane segment at 268–292 threads the bilayer; it reads ATVLVLVVLLLFIICWLPFQISTFL. The Extracellular portion of the chain corresponds to 293–311; it reads DTLHRLGILSSCQDERIID. Residues 312–335 traverse the membrane as a helical segment; the sequence is VITQIASFMAYSNSCLNPLVYVIV. At 336–391 the chain is on the cytoplasmic side; sequence GKRFRKKSWEVYQGVCQKGGCRSEPIQMENSMGTLRTSISVERQIHKLQDWAGSRQ. A Phosphotyrosine modification is found at Tyr-347. Cys-351 carries the S-palmitoyl cysteine lipid modification. Ser-366 carries the phosphoserine modification. A Phosphothreonine modification is found at Thr-369. A phosphoserine; by GRK6 mark is found at Ser-373 and Ser-375.

This sequence belongs to the G-protein coupled receptor 1 family. Bradykinin receptor subfamily. BDKRB2 sub-subfamily. Forms a complex with PECAM1 and GNAQ. Interacts with PECAM1. Ubiquitous. Widespread in normal smooth muscle tissue and neurons.

The protein resides in the cell membrane. Functionally, receptor for bradykinin. It is associated with G proteins that activate a phosphatidylinositol-calcium second messenger system. The sequence is that of B2 bradykinin receptor (BDKRB2) from Homo sapiens (Human).